Reading from the N-terminus, the 158-residue chain is Ribonuclease H (158 aa).

Positions 3 to 144 constitute an RNase H type-1 domain; the sequence is ELKLIHIFTD…CDQLARAAAE (142 aa). Mg(2+)-binding residues include aspartate 12, glutamate 50, aspartate 72, and aspartate 136.

The protein belongs to the RNase H family. Monomer. Mg(2+) serves as cofactor.

Its subcellular location is the cytoplasm. It carries out the reaction Endonucleolytic cleavage to 5'-phosphomonoester.. In terms of biological role, endonuclease that specifically degrades the RNA of RNA-DNA hybrids. The sequence is that of Ribonuclease H from Shewanella sp. (strain MR-4).